Here is a 649-residue protein sequence, read N- to C-terminus: Acetylcholinesterase (649 aa).

Positions 1-38 (MAISCRQSRVLPMSLPLPLTIPLPLVLVLSLHLSGVCG) are cleaved as a signal peptide. A disulfide bridge connects residues cysteine 104 and cysteine 131. 2 N-linked (GlcNAc...) asparagine glycosylation sites follow: asparagine 126 and asparagine 174. The Acyl-ester intermediate role is filled by serine 276. Cysteines 330 and 345 form a disulfide. N-linked (GlcNAc...) asparagine glycosylation occurs at asparagine 331. Active-site charge relay system residues include glutamate 405 and histidine 518. Residues cysteine 480 and cysteine 598 are joined by a disulfide bond. Residue asparagine 531 is glycosylated (N-linked (GlcNAc...) asparagine). Serine 619 carries the GPI-anchor amidated serine lipid modification. A propeptide spans 620 to 649 (GSASISPRLQLLGIAALIYICAALRTKRVF) (removed in mature form).

The protein belongs to the type-B carboxylesterase/lipase family. In terms of assembly, homodimer; disulfide-linked. The active unit is formed by non-covalent association of the 55 kDa and 16 kDa subunits. Post-translationally, proteolytic cleavage into the 16 kDa subunit and the 55 kDa subunits originates from the hydrophilic peptide, aa 148-180, and is associated with excretion out of the cell. In terms of processing, neither N-glycosylation nor dimerization is required for enzyme activity or substrate specificity, but protects the protein against proteolytic digestion.

It is found in the synapse. It localises to the cell membrane. The catalysed reaction is acetylcholine + H2O = choline + acetate + H(+). Rapidly hydrolyzes choline released into the synapse. It can hydrolyze butyrylthiocholine. This is Acetylcholinesterase (Ace) from Drosophila melanogaster (Fruit fly).